Here is a 302-residue protein sequence, read N- to C-terminus: Citrate lyase subunit beta (302 aa).

Residues arginine 69 and glutamate 132 each contribute to the substrate site. 2 residues coordinate Mg(2+): glutamate 132 and aspartate 159.

It belongs to the HpcH/HpaI aldolase family. Citrate lyase beta subunit subfamily. Oligomer with a subunit composition of (alpha,beta,gamma)6. Mg(2+) serves as cofactor.

It is found in the cytoplasm. The catalysed reaction is citrate = oxaloacetate + acetate. It catalyses the reaction (3S)-citryl-CoA = oxaloacetate + acetyl-CoA. Functionally, represents a citryl-ACP lyase. In Leuconostoc mesenteroides subsp. cremoris, this protein is Citrate lyase subunit beta (citE).